Consider the following 431-residue polypeptide: Glucose-1-phosphate adenylyltransferase (431 aa).

Lys-39 contributes to the beta-D-fructose 1,6-bisphosphate binding site. AMP contacts are provided by Arg-40, His-46, and Arg-52. Tyr-114 provides a ligand contact to alpha-D-glucose 1-phosphate. An AMP-binding site is contributed by Arg-130. Residues Gly-179, 194 to 195, and Ser-212 contribute to the alpha-D-glucose 1-phosphate site; that span reads EK. Glu-370 and Arg-386 together coordinate AMP. Beta-D-fructose 1,6-bisphosphate contacts are provided by residues 419–423 and 429–431; these read REMLR and QER.

Belongs to the bacterial/plant glucose-1-phosphate adenylyltransferase family. Homotetramer.

It carries out the reaction alpha-D-glucose 1-phosphate + ATP + H(+) = ADP-alpha-D-glucose + diphosphate. The protein operates within glycan biosynthesis; glycogen biosynthesis. With respect to regulation, allosterically activated by fructose-1,6-bisphosphate (F16BP) and inhibited by AMP. In terms of biological role, involved in the biosynthesis of ADP-glucose, a building block required for the elongation reactions to produce glycogen. Catalyzes the reaction between ATP and alpha-D-glucose 1-phosphate (G1P) to produce pyrophosphate and ADP-Glc. The chain is Glucose-1-phosphate adenylyltransferase from Escherichia coli O7:K1 (strain IAI39 / ExPEC).